The primary structure comprises 242 residues: Ribonuclease PH (242 aa).

Residues R90 and 128–130 (GTR) each bind phosphate.

Belongs to the RNase PH family. As to quaternary structure, homohexameric ring arranged as a trimer of dimers.

The enzyme catalyses tRNA(n+1) + phosphate = tRNA(n) + a ribonucleoside 5'-diphosphate. In terms of biological role, phosphorolytic 3'-5' exoribonuclease that plays an important role in tRNA 3'-end maturation. Removes nucleotide residues following the 3'-CCA terminus of tRNAs; can also add nucleotides to the ends of RNA molecules by using nucleoside diphosphates as substrates, but this may not be physiologically important. Probably plays a role in initiation of 16S rRNA degradation (leading to ribosome degradation) during starvation. This chain is Ribonuclease PH, found in Nocardioides sp. (strain ATCC BAA-499 / JS614).